Consider the following 346-residue polypeptide: Cyclin-dependent kinase 7 (346 aa).

Position 2 is an N-acetylalanine (A2). A Phosphoserine modification is found at S7. One can recognise a Protein kinase domain in the interval 12–295; it reads YEKLDFLGEG…ASQALKTKYF (284 aa). Residues 18–26 and K41 contribute to the ATP site; that span reads LGEGQFATV. Catalysis depends on D137, which acts as the Proton acceptor. At S164 the chain carries Phosphoserine; by CDK1 and CDK2. A Phosphothreonine; by CDK2 modification is found at T170.

This sequence belongs to the protein kinase superfamily. CMGC Ser/Thr protein kinase family. CDC2/CDKX subfamily. As to quaternary structure, associates primarily with cyclin-H (CCNH) and MAT1 to form the CAK complex. CAK can further associate with the core-TFIIH to form the TFIIH basal transcription factor; this complex is sensitive to UV light. The CAK complex binds to p53/TP53 in response to DNA damage. Interacts with CDK2, SF1/NR5A1, PUF60 and PRKCI. Interacts with HINT1. In terms of processing, phosphorylation of Ser-164 during mitosis inactivates the enzyme. Phosphorylation of Thr-170 is required for activity. Phosphorylated at Ser-164 and Thr-170 by CDK2.

Its subcellular location is the nucleus. The protein localises to the cytoplasm. The protein resides in the perinuclear region. It catalyses the reaction L-seryl-[protein] + ATP = O-phospho-L-seryl-[protein] + ADP + H(+). The enzyme catalyses L-threonyl-[protein] + ATP = O-phospho-L-threonyl-[protein] + ADP + H(+). The catalysed reaction is [DNA-directed RNA polymerase] + ATP = phospho-[DNA-directed RNA polymerase] + ADP + H(+). Phosphorylation at Thr-170 is required for enzymatic activity. The association of p53/TP53 to the CAK complex in response to DNA damage reduces kinase activity toward CDK2 and RNA polymerase II repetitive C-terminal domain (CTD), thus stopping cell cycle progression. In terms of biological role, serine/threonine kinase involved in cell cycle control and in RNA polymerase II-mediated RNA transcription. Cyclin-dependent kinases (CDKs) are activated by the binding to a cyclin and mediate the progression through the cell cycle. Each different complex controls a specific transition between 2 subsequent phases in the cell cycle. Required for both activation and complex formation of CDK1/cyclin-B during G2-M transition, and for activation of CDK2/cyclins during G1-S transition (but not complex formation). CDK7 is the catalytic subunit of the CDK-activating kinase (CAK) complex. Phosphorylates SPT5/SUPT5H, SF1/NR5A1, POLR2A, p53/TP53, CDK1, CDK2, CDK4, CDK6 and CDK11B/CDK11. Initiates transcription by RNA polymerase II by mediating phosphorylation of POLR2A at 'Ser-5' of the repetitive C-terminal domain (CTD) when POLR2A is in complex with DNA, promoting dissociation from DNA and initiation. CAK activates the cyclin-associated kinases CDK1, CDK2, CDK4 and CDK6 by threonine phosphorylation, thus regulating cell cycle progression. CAK complexed to the core-TFIIH basal transcription factor activates RNA polymerase II by serine phosphorylation of the CTD of POLR2A, allowing its escape from the promoter and elongation of the transcripts. Its expression and activity are constant throughout the cell cycle. Upon DNA damage, triggers p53/TP53 activation by phosphorylation, but is inactivated in turn by p53/TP53; this feedback loop may lead to an arrest of the cell cycle and of the transcription, helping in cell recovery, or to apoptosis. Required for DNA-bound peptides-mediated transcription and cellular growth inhibition. This Mus musculus (Mouse) protein is Cyclin-dependent kinase 7 (Cdk7).